A 186-amino-acid polypeptide reads, in one-letter code: Threonylcarbamoyl-AMP synthase (186 aa).

One can recognise a YrdC-like domain in the interval 3–186; that stretch reads ELTLDSAVAT…DALSGNVLRS (184 aa).

It belongs to the SUA5 family. TsaC subfamily.

It is found in the cytoplasm. It catalyses the reaction L-threonine + hydrogencarbonate + ATP = L-threonylcarbamoyladenylate + diphosphate + H2O. Required for the formation of a threonylcarbamoyl group on adenosine at position 37 (t(6)A37) in tRNAs that read codons beginning with adenine. Catalyzes the conversion of L-threonine, HCO(3)(-)/CO(2) and ATP to give threonylcarbamoyl-AMP (TC-AMP) as the acyladenylate intermediate, with the release of diphosphate. In Stenotrophomonas maltophilia (strain K279a), this protein is Threonylcarbamoyl-AMP synthase.